The sequence spans 554 residues: Arginine--tRNA ligase (554 aa).

Residues 132-142 (ANPTGPIHLGG) carry the 'HIGH' region motif.

It belongs to the class-I aminoacyl-tRNA synthetase family. Monomer.

It is found in the cytoplasm. It carries out the reaction tRNA(Arg) + L-arginine + ATP = L-arginyl-tRNA(Arg) + AMP + diphosphate. The polypeptide is Arginine--tRNA ligase (Kineococcus radiotolerans (strain ATCC BAA-149 / DSM 14245 / SRS30216)).